The chain runs to 102 residues: Small ribosomal subunit protein uS10 (102 aa).

This sequence belongs to the universal ribosomal protein uS10 family. As to quaternary structure, part of the 30S ribosomal subunit.

Involved in the binding of tRNA to the ribosomes. The chain is Small ribosomal subunit protein uS10 from Parvibaculum lavamentivorans (strain DS-1 / DSM 13023 / NCIMB 13966).